A 168-amino-acid chain; its full sequence is S-ribosylhomocysteine lyase (168 aa).

Fe cation-binding residues include His-54, His-58, and Cys-128.

It belongs to the LuxS family. Homodimer. Requires Fe cation as cofactor.

It catalyses the reaction S-(5-deoxy-D-ribos-5-yl)-L-homocysteine = (S)-4,5-dihydroxypentane-2,3-dione + L-homocysteine. Functionally, involved in the synthesis of autoinducer 2 (AI-2) which is secreted by bacteria and is used to communicate both the cell density and the metabolic potential of the environment. The regulation of gene expression in response to changes in cell density is called quorum sensing. Catalyzes the transformation of S-ribosylhomocysteine (RHC) to homocysteine (HC) and 4,5-dihydroxy-2,3-pentadione (DPD). The polypeptide is S-ribosylhomocysteine lyase (Neisseria meningitidis serogroup C / serotype 2a (strain ATCC 700532 / DSM 15464 / FAM18)).